The primary structure comprises 138 residues: Microneme antigen L2 (138 aa).

PAN domains follow at residues 9–78 and 82–138; these read CFAH…PRSC and CSDA…SKRA. Cystine bridges form between Cys-9–Cys-78, Cys-34–Cys-56, Cys-38–Cys-44, Cys-82–Cys-86, Cys-107–Cys-127, and Cys-111–Cys-117. Ser-18 lines the a carbohydrate pocket. Residues Lys-59, Tyr-66, and Asp-71 each coordinate a carbohydrate.

As to quaternary structure, homodimer or heterodimer. Post-translationally, contains six disulfide bonds.

It localises to the cytoplasmic vesicle. The protein resides in the secretory vesicle. Its subcellular location is the microneme. Its function is as follows. Galactose-binding lectin. Plays a role in adhesion to the host cell. Has a potential role in invasion of host cells. This is Microneme antigen L2 from Sarcocystis muris.